A 71-amino-acid polypeptide reads, in one-letter code: Small ribosomal subunit protein bS21 (71 aa).

The protein belongs to the bacterial ribosomal protein bS21 family.

The protein is Small ribosomal subunit protein bS21 of Acinetobacter baylyi (strain ATCC 33305 / BD413 / ADP1).